Here is a 271-residue protein sequence, read N- to C-terminus: Elongation factor Ts (271 aa).

The involved in Mg(2+) ion dislocation from EF-Tu stretch occupies residues 76-79 (TDFV).

It belongs to the EF-Ts family.

It is found in the cytoplasm. Functionally, associates with the EF-Tu.GDP complex and induces the exchange of GDP to GTP. It remains bound to the aminoacyl-tRNA.EF-Tu.GTP complex up to the GTP hydrolysis stage on the ribosome. This chain is Elongation factor Ts, found in Mycolicibacterium vanbaalenii (strain DSM 7251 / JCM 13017 / BCRC 16820 / KCTC 9966 / NRRL B-24157 / PYR-1) (Mycobacterium vanbaalenii).